Consider the following 377-residue polypeptide: Putative efflux system component YknX (377 aa).

Residues 3–23 form a helical membrane-spanning segment; sequence KVWIGIGIAVIVALFVGINIY. Residues 95 to 187 adopt a coiled-coil conformation; sequence TNEQLSLEKE…RVSDLEVKSE (93 aa).

The protein belongs to the membrane fusion protein (MFP) (TC 8.A.1) family. Part of a complex composed of YknX, YknY and YknZ. The complex interacts with YknW.

The protein localises to the cell membrane. Its function is as follows. Part of an unusual four-component transporter, which is required for protection against the killing factor SdpC (sporulation-delaying protein). The polypeptide is Putative efflux system component YknX (yknX) (Bacillus subtilis (strain 168)).